A 360-amino-acid polypeptide reads, in one-letter code: Histidinol-phosphate aminotransferase (360 aa).

Position 223 is an N6-(pyridoxal phosphate)lysine (K223).

The protein belongs to the class-II pyridoxal-phosphate-dependent aminotransferase family. Histidinol-phosphate aminotransferase subfamily. Homodimer. Pyridoxal 5'-phosphate serves as cofactor.

The enzyme catalyses L-histidinol phosphate + 2-oxoglutarate = 3-(imidazol-4-yl)-2-oxopropyl phosphate + L-glutamate. The protein operates within amino-acid biosynthesis; L-histidine biosynthesis; L-histidine from 5-phospho-alpha-D-ribose 1-diphosphate: step 7/9. This is Histidinol-phosphate aminotransferase from Bacillus velezensis (strain DSM 23117 / BGSC 10A6 / LMG 26770 / FZB42) (Bacillus amyloliquefaciens subsp. plantarum).